The primary structure comprises 244 residues: 1-(5-phosphoribosyl)-5-[(5-phosphoribosylamino)methylideneamino] imidazole-4-carboxamide isomerase (244 aa).

Asp12 serves as the catalytic Proton acceptor. The active-site Proton donor is Asp131.

The protein belongs to the HisA/HisF family.

The protein localises to the cytoplasm. The enzyme catalyses 1-(5-phospho-beta-D-ribosyl)-5-[(5-phospho-beta-D-ribosylamino)methylideneamino]imidazole-4-carboxamide = 5-[(5-phospho-1-deoxy-D-ribulos-1-ylimino)methylamino]-1-(5-phospho-beta-D-ribosyl)imidazole-4-carboxamide. It functions in the pathway amino-acid biosynthesis; L-histidine biosynthesis; L-histidine from 5-phospho-alpha-D-ribose 1-diphosphate: step 4/9. The polypeptide is 1-(5-phosphoribosyl)-5-[(5-phosphoribosylamino)methylideneamino] imidazole-4-carboxamide isomerase (Nocardioides sp. (strain ATCC BAA-499 / JS614)).